A 435-amino-acid polypeptide reads, in one-letter code: ATP-dependent protease ATPase subunit HslU (435 aa).

Residues isoleucine 18, 60 to 65 (GVGKTE), aspartate 248, glutamate 313, and arginine 385 each bind ATP.

It belongs to the ClpX chaperone family. HslU subfamily. In terms of assembly, a double ring-shaped homohexamer of HslV is capped on each side by a ring-shaped HslU homohexamer. The assembly of the HslU/HslV complex is dependent on binding of ATP.

The protein localises to the cytoplasm. Its function is as follows. ATPase subunit of a proteasome-like degradation complex; this subunit has chaperone activity. The binding of ATP and its subsequent hydrolysis by HslU are essential for unfolding of protein substrates subsequently hydrolyzed by HslV. HslU recognizes the N-terminal part of its protein substrates and unfolds these before they are guided to HslV for hydrolysis. In Rhizobium meliloti (strain 1021) (Ensifer meliloti), this protein is ATP-dependent protease ATPase subunit HslU.